The chain runs to 872 residues: DNA mismatch repair protein MutS (872 aa).

632 to 639 (GPNMGGKS) serves as a coordination point for ATP.

Belongs to the DNA mismatch repair MutS family.

In terms of biological role, this protein is involved in the repair of mismatches in DNA. It is possible that it carries out the mismatch recognition step. This protein has a weak ATPase activity. The polypeptide is DNA mismatch repair protein MutS (Colwellia psychrerythraea (strain 34H / ATCC BAA-681) (Vibrio psychroerythus)).